Consider the following 179-residue polypeptide: Large ribosomal subunit protein uL5 (179 aa).

It belongs to the universal ribosomal protein uL5 family. As to quaternary structure, part of the 50S ribosomal subunit; part of the 5S rRNA/L5/L18/L25 subcomplex. Contacts the 5S rRNA and the P site tRNA. Forms a bridge to the 30S subunit in the 70S ribosome.

Functionally, this is one of the proteins that bind and probably mediate the attachment of the 5S RNA into the large ribosomal subunit, where it forms part of the central protuberance. In the 70S ribosome it contacts protein S13 of the 30S subunit (bridge B1b), connecting the 2 subunits; this bridge is implicated in subunit movement. Contacts the P site tRNA; the 5S rRNA and some of its associated proteins might help stabilize positioning of ribosome-bound tRNAs. The sequence is that of Large ribosomal subunit protein uL5 from Burkholderia vietnamiensis (strain G4 / LMG 22486) (Burkholderia cepacia (strain R1808)).